Here is a 460-residue protein sequence, read N- to C-terminus: Adenosylhomocysteinase (460 aa).

Substrate is bound by residues T83, D158, and E184. An NAD(+)-binding site is contributed by 185–187 (TTT). Substrate is bound by residues K214 and D218. NAD(+) is bound by residues N219, 248-253 (GYGDVG), E271, 327-329 (IGH), and N373.

The protein belongs to the adenosylhomocysteinase family. Requires NAD(+) as cofactor.

Its subcellular location is the cytoplasm. It carries out the reaction S-adenosyl-L-homocysteine + H2O = L-homocysteine + adenosine. It participates in amino-acid biosynthesis; L-homocysteine biosynthesis; L-homocysteine from S-adenosyl-L-homocysteine: step 1/1. Functionally, may play a key role in the regulation of the intracellular concentration of adenosylhomocysteine. This chain is Adenosylhomocysteinase, found in Bdellovibrio bacteriovorus (strain ATCC 15356 / DSM 50701 / NCIMB 9529 / HD100).